Reading from the N-terminus, the 175-residue chain is Endoribonuclease YbeY (175 aa).

Zn(2+) contacts are provided by His-129, His-133, and His-139.

The protein belongs to the endoribonuclease YbeY family. Requires Zn(2+) as cofactor.

Its subcellular location is the cytoplasm. Functionally, single strand-specific metallo-endoribonuclease involved in late-stage 70S ribosome quality control and in maturation of the 3' terminus of the 16S rRNA. The sequence is that of Endoribonuclease YbeY from Lactobacillus gasseri (strain ATCC 33323 / DSM 20243 / BCRC 14619 / CIP 102991 / JCM 1131 / KCTC 3163 / NCIMB 11718 / NCTC 13722 / AM63).